The chain runs to 208 residues: Large ribosomal subunit protein uL4 (208 aa).

The tract at residues 42–77 is disordered; it reads SMRQGTHKTKTKTEVSGGGRKPWRQKGTGRARQGSI.

Belongs to the universal ribosomal protein uL4 family. As to quaternary structure, part of the 50S ribosomal subunit.

In terms of biological role, one of the primary rRNA binding proteins, this protein initially binds near the 5'-end of the 23S rRNA. It is important during the early stages of 50S assembly. It makes multiple contacts with different domains of the 23S rRNA in the assembled 50S subunit and ribosome. Its function is as follows. Forms part of the polypeptide exit tunnel. This is Large ribosomal subunit protein uL4 from Spiroplasma kunkelii.